The following is a 192-amino-acid chain: Fe/S biogenesis protein NfuA (192 aa).

[4Fe-4S] cluster contacts are provided by C149 and C152.

Belongs to the NfuA family. As to quaternary structure, homodimer. The cofactor is [4Fe-4S] cluster.

Its function is as follows. Involved in iron-sulfur cluster biogenesis. Binds a 4Fe-4S cluster, can transfer this cluster to apoproteins, and thereby intervenes in the maturation of Fe/S proteins. Could also act as a scaffold/chaperone for damaged Fe/S proteins. This Shewanella sediminis (strain HAW-EB3) protein is Fe/S biogenesis protein NfuA.